The chain runs to 346 residues: NADH-ubiquinone oxidoreductase chain 2 (346 aa).

The next 10 helical transmembrane spans lie at 25–45 (HWILAWTGLEINTLAIIPLIS), 52–72 (AIEAAIKYFLTQSTASALILF), 95–115 (CLILTMAIAIKLGLVPFHFWF), 124–144 (LITALLLSTLMKLPPMTLLLM), 149–169 (LNPALLTLLAVSSALVGGWMG), 178–196 (ILAFSSISHLGWMIVIIIY), 200–219 (LTILTFIIYSLMTSTVFLSL), 247–267 (TLLSLAGLPPLTGFMPKWLII), 274–294 (EMTPVATTIAMLSLLGLFFYL), and 326–346 (AILTVLSISLLPLSPLITTLV).

The protein belongs to the complex I subunit 2 family.

It localises to the mitochondrion inner membrane. The catalysed reaction is a ubiquinone + NADH + 5 H(+)(in) = a ubiquinol + NAD(+) + 4 H(+)(out). Core subunit of the mitochondrial membrane respiratory chain NADH dehydrogenase (Complex I) that is believed to belong to the minimal assembly required for catalysis. Complex I functions in the transfer of electrons from NADH to the respiratory chain. The immediate electron acceptor for the enzyme is believed to be ubiquinone. The chain is NADH-ubiquinone oxidoreductase chain 2 (MT-ND2) from Coturnix japonica (Japanese quail).